Consider the following 129-residue polypeptide: Chromatin accessibility complex protein 1 (129 aa).

Residue A2 is modified to N-acetylalanine. K102 is modified (N6-acetyllysine). A coiled-coil region spans residues 104–120; sequence LKMLKEKREEEEDNEDD. A disordered region spans residues 109–129; the sequence is EKREEEEDNEDDGSDLGEALA. Residues 112–123 are compositionally biased toward acidic residues; that stretch reads EEEEDNEDDGSD. S122 bears the Phosphoserine mark.

As to quaternary structure, heterodimer with POLE3; binds to DNA. Component of the CHRAC ISWI chromatin remodeling complex at least composed of SMARCA5/SNF2H, BAZ1A/ACF1, CHRAC1 and POLE3; the complex preferentially binds DNA through the CHRAC1-POLE3 heterodimer and possesses ATP-dependent nucleosome-remodeling activity. Within the complex, the heterodimer with POLE3 interacts with SMARCA5/SNF2H; the interaction is direct and enhances nucleosome sliding activity by the SMARCA5/SNF2H and BAZ1A/ACF1 interaction. Within the complex, the heterodimer with POLE3 interacts with BAZ1A/ACF1; the interactions are direct. Ubiquitously expressed.

It is found in the nucleus. Functionally, forms a complex with DNA polymerase epsilon subunit POLE3 and binds naked DNA, which is then incorporated into chromatin, aided by the nucleosome remodeling activity of ISWI/SNF2H and ACF1. Does not enhance nucleosome sliding activity of the ACF-5 ISWI chromatin remodeling complex. This is Chromatin accessibility complex protein 1 (Chrac1) from Mus musculus (Mouse).